Here is a 479-residue protein sequence, read N- to C-terminus: Ribosomal RNA small subunit methyltransferase F (479 aa).

S-adenosyl-L-methionine is bound by residues 125 to 131 (AAAPGSK), Glu149, Asp176, and Asp194. Cys247 acts as the Nucleophile in catalysis.

This sequence belongs to the class I-like SAM-binding methyltransferase superfamily. RsmB/NOP family.

It is found in the cytoplasm. It carries out the reaction cytidine(1407) in 16S rRNA + S-adenosyl-L-methionine = 5-methylcytidine(1407) in 16S rRNA + S-adenosyl-L-homocysteine + H(+). In terms of biological role, specifically methylates the cytosine at position 1407 (m5C1407) of 16S rRNA. The sequence is that of Ribosomal RNA small subunit methyltransferase F from Escherichia coli (strain SE11).